The following is a 260-amino-acid chain: 5-oxoprolinase subunit A (260 aa).

This sequence belongs to the LamB/PxpA family. As to quaternary structure, forms a complex composed of PxpA, PxpB and PxpC.

It carries out the reaction 5-oxo-L-proline + ATP + 2 H2O = L-glutamate + ADP + phosphate + H(+). Functionally, catalyzes the cleavage of 5-oxoproline to form L-glutamate coupled to the hydrolysis of ATP to ADP and inorganic phosphate. This is 5-oxoprolinase subunit A from Methylococcus capsulatus (strain ATCC 33009 / NCIMB 11132 / Bath).